The following is a 468-amino-acid chain: 6-phospho-beta-galactosidase (468 aa).

5 residues coordinate D-galactose 6-phosphate: Gln-19, His-116, Asn-159, Glu-160, and Asn-297. The active-site Proton donor is the Glu-160. Residue Glu-375 is the Nucleophile of the active site. D-galactose 6-phosphate contacts are provided by Ser-428, Trp-429, Lys-435, and Tyr-437.

Belongs to the glycosyl hydrolase 1 family.

It catalyses the reaction a 6-phospho-beta-D-galactoside + H2O = D-galactose 6-phosphate + an alcohol. The protein operates within carbohydrate metabolism; lactose degradation; D-galactose 6-phosphate and beta-D-glucose from lactose 6-phosphate: step 1/1. The sequence is that of 6-phospho-beta-galactosidase from Streptococcus pyogenes serotype M18 (strain MGAS8232).